The primary structure comprises 346 residues: Biotin synthase (346 aa).

Residues 38 to 256 (RQVQVSTLLS…IAIARIMMPT (219 aa)) enclose the Radical SAM core domain. Positions 53, 57, and 60 each coordinate [4Fe-4S] cluster. [2Fe-2S] cluster contacts are provided by Cys97, Cys128, Cys188, and Arg260.

The protein belongs to the radical SAM superfamily. Biotin synthase family. As to quaternary structure, homodimer. The cofactor is [4Fe-4S] cluster. [2Fe-2S] cluster serves as cofactor.

The catalysed reaction is (4R,5S)-dethiobiotin + (sulfur carrier)-SH + 2 reduced [2Fe-2S]-[ferredoxin] + 2 S-adenosyl-L-methionine = (sulfur carrier)-H + biotin + 2 5'-deoxyadenosine + 2 L-methionine + 2 oxidized [2Fe-2S]-[ferredoxin]. Its pathway is cofactor biosynthesis; biotin biosynthesis; biotin from 7,8-diaminononanoate: step 2/2. In terms of biological role, catalyzes the conversion of dethiobiotin (DTB) to biotin by the insertion of a sulfur atom into dethiobiotin via a radical-based mechanism. The polypeptide is Biotin synthase (Klebsiella pneumoniae (strain 342)).